A 68-amino-acid chain; its full sequence is Neuronal regeneration-related protein (68 aa).

Interacts with FLNA. Interacts with the latency-associated peptides (LAP) of TGFB1 and TGFB2; the interaction results in a decrease in TGFB autoinduction. Post-translationally, phosphorylated on Ser-59. Phosphorylation decreases stability and activity.

The protein localises to the cytoplasm. Its function is as follows. May have roles in neural function. Ectopic expression promotes axonal regeneration. Also augments motility of gliomas. May also have roles in cellular differentiation. Induces differentiation of fibroblast into myofibroblast and myofibroblast ameboid migration. Increases retinoic-acid regulation of lipid-droplet biogenesis. Down-regulates the expression of TGFB1 and TGFB2 but not of TGFB3. May play a role in the regulation of alveolar generation. This Rattus norvegicus (Rat) protein is Neuronal regeneration-related protein (Nrep).